The sequence spans 1405 residues: DNA-directed RNA polymerase III subunit rpc1 (1405 aa).

Residues Cys66, Cys69, Cys76, His79, Cys106, Cys109, and Cys153 each coordinate Zn(2+). Residues Asp493, Asp495, and Asp497 each coordinate Mg(2+). A bridging helix region spans residues 838-850 (PTEFLFHAISGRE).

The protein belongs to the RNA polymerase beta' chain family. In terms of assembly, component of the RNA polymerase III (Pol III) complex consisting of 17 subunits.

The protein localises to the nucleus. It carries out the reaction RNA(n) + a ribonucleoside 5'-triphosphate = RNA(n+1) + diphosphate. In terms of biological role, DNA-dependent RNA polymerase catalyzes the transcription of DNA into RNA using the four ribonucleoside triphosphates as substrates. Largest and catalytic core component of RNA polymerase III which synthesizes small RNAs, such as 5S rRNA and tRNAs. Forms the polymerase active center together with the second largest subunit. A single-stranded DNA template strand of the promoter is positioned within the central active site cleft of Pol III. A bridging helix emanates from RPC1 and crosses the cleft near the catalytic site and is thought to promote translocation of Pol III by acting as a ratchet that moves the RNA-DNA hybrid through the active site by switching from straight to bent conformations at each step of nucleotide addition. In Schizosaccharomyces pombe (strain 972 / ATCC 24843) (Fission yeast), this protein is DNA-directed RNA polymerase III subunit rpc1 (rpc1).